Consider the following 213-residue polypeptide: ATP phosphoribosyltransferase (213 aa).

This sequence belongs to the ATP phosphoribosyltransferase family. Short subfamily. In terms of assembly, heteromultimer composed of HisG and HisZ subunits.

It is found in the cytoplasm. The enzyme catalyses 1-(5-phospho-beta-D-ribosyl)-ATP + diphosphate = 5-phospho-alpha-D-ribose 1-diphosphate + ATP. It functions in the pathway amino-acid biosynthesis; L-histidine biosynthesis; L-histidine from 5-phospho-alpha-D-ribose 1-diphosphate: step 1/9. Functionally, catalyzes the condensation of ATP and 5-phosphoribose 1-diphosphate to form N'-(5'-phosphoribosyl)-ATP (PR-ATP). Has a crucial role in the pathway because the rate of histidine biosynthesis seems to be controlled primarily by regulation of HisG enzymatic activity. In Listeria monocytogenes serovar 1/2a (strain ATCC BAA-679 / EGD-e), this protein is ATP phosphoribosyltransferase (hisG).